A 318-amino-acid polypeptide reads, in one-letter code: NADH-ubiquinone oxidoreductase chain 1 (318 aa).

The next 8 membrane-spanning stretches (helical) occupy residues 3-23 (FVNL…LTLL), 68-88 (LILF…MWIP), 102-122 (ILFM…SGWA), 146-166 (LAII…STLI), 171-191 (HIWL…STLA), 222-242 (LFFL…TILF), 253-273 (EMYT…FLWI), and 294-314 (LPLT…LASI).

This sequence belongs to the complex I subunit 1 family.

The protein resides in the mitochondrion inner membrane. The enzyme catalyses a ubiquinone + NADH + 5 H(+)(in) = a ubiquinol + NAD(+) + 4 H(+)(out). Its function is as follows. Core subunit of the mitochondrial membrane respiratory chain NADH dehydrogenase (Complex I) that is believed to belong to the minimal assembly required for catalysis. Complex I functions in the transfer of electrons from NADH to the respiratory chain. The immediate electron acceptor for the enzyme is believed to be ubiquinone. The polypeptide is NADH-ubiquinone oxidoreductase chain 1 (MT-ND1) (Nyctalus plancyi velutinus (Fine-haired noctule)).